The following is a 180-amino-acid chain: ATP-dependent protease subunit HslV (180 aa).

Residue threonine 8 is part of the active site. Na(+) is bound by residues alanine 165, cysteine 168, and threonine 171.

It belongs to the peptidase T1B family. HslV subfamily. As to quaternary structure, a double ring-shaped homohexamer of HslV is capped on each side by a ring-shaped HslU homohexamer. The assembly of the HslU/HslV complex is dependent on binding of ATP.

The protein resides in the cytoplasm. It carries out the reaction ATP-dependent cleavage of peptide bonds with broad specificity.. Its activity is regulated as follows. Allosterically activated by HslU binding. Functionally, protease subunit of a proteasome-like degradation complex believed to be a general protein degrading machinery. The sequence is that of ATP-dependent protease subunit HslV from Macrococcus caseolyticus (strain JCSC5402) (Macrococcoides caseolyticum).